We begin with the raw amino-acid sequence, 700 residues long: Elongation factor G (700 aa).

The tr-type G domain maps to 10–286; sequence NKVRNIGIMA…AVIDYLPNPL (277 aa). GTP-binding positions include 19–26, 83–87, and 137–140; these read AHIDAGKT, DTPGH, and NKMD.

This sequence belongs to the TRAFAC class translation factor GTPase superfamily. Classic translation factor GTPase family. EF-G/EF-2 subfamily.

The protein resides in the cytoplasm. Catalyzes the GTP-dependent ribosomal translocation step during translation elongation. During this step, the ribosome changes from the pre-translocational (PRE) to the post-translocational (POST) state as the newly formed A-site-bound peptidyl-tRNA and P-site-bound deacylated tRNA move to the P and E sites, respectively. Catalyzes the coordinated movement of the two tRNA molecules, the mRNA and conformational changes in the ribosome. The polypeptide is Elongation factor G (Rhodococcus erythropolis (strain PR4 / NBRC 100887)).